Here is a 461-residue protein sequence, read N- to C-terminus: Cysteine--tRNA ligase (461 aa).

Cys-30 is a binding site for Zn(2+). The short motif at 32–42 (VTVYDLCHIGH) is the 'HIGH' region element. Residues Cys-211, His-236, and Glu-240 each coordinate Zn(2+). The 'KMSKS' region signature appears at 268–272 (KMSKS). Lys-271 serves as a coordination point for ATP.

The protein belongs to the class-I aminoacyl-tRNA synthetase family. Monomer. Zn(2+) is required as a cofactor.

It is found in the cytoplasm. It catalyses the reaction tRNA(Cys) + L-cysteine + ATP = L-cysteinyl-tRNA(Cys) + AMP + diphosphate. This is Cysteine--tRNA ligase from Shewanella sp. (strain ANA-3).